The sequence spans 393 residues: MIKYEIPKSRPNEFSKVLPLVEQILNQVKERGDKALLELEEKYDKAKLDSLVENRIDELASKIPEEYKAAIDRIYDQLVEFHKTTLPYMVGGGYNGIEFGILWRAIEKVGIYVPGGLKSYPSTLLMAAIPARVAGVSEIYVATPPNRIDSVIAYIAKKLKINALYRIGGAQAIAALAYGTESVKKVDKIVGPGNIFVQASKFLVSKDVAIDGIEGPTELVVIADSSADYRHVILDMRAQAEHGSTSYIILVTTSDFLIDKVREELDKEEFTYYIVKVKSIDEAIDVANDIAPEHLSLFVNDPKSYLHKIKNAGAISLGKTPPALIDYAAGPDHILPTNAWSRVRGGLTVYDFLKPISYANSVNPDKELVNMAKLIAEYEGFIYHSKSIGARYE.

3 residues coordinate NAD(+): tyrosine 112, glutamine 171, and asparagine 194. Threonine 217, glutamine 239, and histidine 242 together coordinate substrate. Residues glutamine 239 and histidine 242 each coordinate Zn(2+). Catalysis depends on proton acceptor residues glutamate 293 and histidine 294. Histidine 294, aspartate 326, glutamate 379, and histidine 384 together coordinate substrate. Aspartate 326 is a Zn(2+) binding site. Residue histidine 384 participates in Zn(2+) binding.

It belongs to the histidinol dehydrogenase family. It depends on Zn(2+) as a cofactor.

The enzyme catalyses L-histidinol + 2 NAD(+) + H2O = L-histidine + 2 NADH + 3 H(+). It functions in the pathway amino-acid biosynthesis; L-histidine biosynthesis; L-histidine from 5-phospho-alpha-D-ribose 1-diphosphate: step 9/9. Its function is as follows. Catalyzes the sequential NAD-dependent oxidations of L-histidinol to L-histidinaldehyde and then to L-histidine. This is Histidinol dehydrogenase from Sulfolobus acidocaldarius (strain ATCC 33909 / DSM 639 / JCM 8929 / NBRC 15157 / NCIMB 11770).